A 245-amino-acid chain; its full sequence is Tegument protein UL51 homolog (245 aa).

C10 carries the S-palmitoyl cysteine; by host lipid modification. Residues 225-245 (PVKSNLKSKHKPKRKASLVAV) form a disordered region. Basic residues predominate over residues 230–245 (LKSKHKPKRKASLVAV).

Belongs to the herpesviridae UL51 family. Oligomerizes. Interacts with ORF55; this interaction mediates ORF55 incorporation to virions. Phosphorylated. Post-translationally, palmitoylation is necessary for Golgi localization.

The protein resides in the virion tegument. Its subcellular location is the host cytoplasm. The protein localises to the host Golgi apparatus. In terms of biological role, plays several roles during the time course of infection, including egress of virus particles from the perinuclear space and secondary envelopment of cytoplasmic capsids that bud into specific trans-Golgi network (TGN)-derived membranes. In Equine herpesvirus 1 (strain Ab4p) (EHV-1), this protein is Tegument protein UL51 homolog.